We begin with the raw amino-acid sequence, 238 residues long: Lactate utilization protein A (238 aa).

It belongs to the LutA/YkgE family.

Is involved in L-lactate degradation and allows cells to grow with lactate as the sole carbon source. The polypeptide is Lactate utilization protein A (Bacillus pumilus (strain SAFR-032)).